The following is a 436-amino-acid chain: Trigger factor (436 aa).

In terms of domain architecture, PPIase FKBP-type spans 162–247 (GDRVIIDFEG…LNNVSEATLP (86 aa)).

The protein belongs to the FKBP-type PPIase family. Tig subfamily.

It is found in the cytoplasm. The enzyme catalyses [protein]-peptidylproline (omega=180) = [protein]-peptidylproline (omega=0). In terms of biological role, involved in protein export. Acts as a chaperone by maintaining the newly synthesized protein in an open conformation. Functions as a peptidyl-prolyl cis-trans isomerase. The polypeptide is Trigger factor (Neisseria meningitidis serogroup C (strain 053442)).